The primary structure comprises 97 residues: Protein RESPONSE TO LOW SULFUR 3 (97 aa).

Residues 8–42 (VTVAAEEVEELRRRNGELEREMEEMKKEMVQLWRR) are a coiled coil.

This chain is Protein RESPONSE TO LOW SULFUR 3, found in Arabidopsis thaliana (Mouse-ear cress).